A 184-amino-acid chain; its full sequence is Transcription termination/antitermination protein NusG (184 aa).

A KOW domain is found at Glu133–Val163.

Belongs to the NusG family.

In terms of biological role, participates in transcription elongation, termination and antitermination. This chain is Transcription termination/antitermination protein NusG, found in Thermus thermophilus (strain ATCC 27634 / DSM 579 / HB8).